The chain runs to 405 residues: Putative polysaccharide ligase RP358 (405 aa).

A run of 10 helical transmembrane segments spans residues 23 to 43, 77 to 97, 120 to 140, 156 to 178, 201 to 221, 227 to 247, 270 to 290, 322 to 342, 353 to 375, and 377 to 397; these read IAAT…ISFI, LFTA…NSLV, VLYI…LFFI, FGLY…AIII, ISDS…FILA, IFFK…PVIA, LFIW…GYGF, ILQI…CLVY, VSNF…MISY, and IWQT…KLLV.

This sequence belongs to the O-antigen ligase family.

The protein localises to the membrane. This is Putative polysaccharide ligase RP358 from Rickettsia prowazekii (strain Madrid E).